Here is a 163-residue protein sequence, read N- to C-terminus: MADLQQLIKNIEQWAEDRNLVEDSTPQKQFIKLMEEFGELCSGVAKNKPDVIKDSIGDCFVVMVILAKQNHIDSVLEKISDLDSSFEKISDLNSFQHVFELGVEEIIVETVVSLGMLASELMGPNLEMPPQVDAIFGWPCLSLKLISRKYNLMLTDCVQAALG.

This is an uncharacterized protein from Haemophilus phage HP1 (strain HP1c1) (Bacteriophage HP1).